The chain runs to 208 residues: LexA repressor (208 aa).

The segment at residues valine 28–alanine 48 is a DNA-binding region (H-T-H motif). Catalysis depends on for autocatalytic cleavage activity residues serine 130 and lysine 168.

This sequence belongs to the peptidase S24 family. As to quaternary structure, homodimer.

The catalysed reaction is Hydrolysis of Ala-|-Gly bond in repressor LexA.. Its function is as follows. Represses a number of genes involved in the response to DNA damage (SOS response), including recA and lexA. In the presence of single-stranded DNA, RecA interacts with LexA causing an autocatalytic cleavage which disrupts the DNA-binding part of LexA, leading to derepression of the SOS regulon and eventually DNA repair. This Shouchella clausii (strain KSM-K16) (Alkalihalobacillus clausii) protein is LexA repressor.